The chain runs to 901 residues: Protein translocase subunit SecA (901 aa).

ATP-binding positions include glutamine 87, 105-109, and aspartate 512; that span reads GEGKT. A disordered region spans residues 852–901; sequence AQMQQLSHQSDDEAAAQDLAAQTGERKVGRNDPCPCGSGKKYKQCHGRLS. 4 residues coordinate Zn(2+): cysteine 885, cysteine 887, cysteine 896, and histidine 897. Residues 891 to 901 show a composition bias toward basic residues; the sequence is KKYKQCHGRLS.

The protein belongs to the SecA family. Monomer and homodimer. Part of the essential Sec protein translocation apparatus which comprises SecA, SecYEG and auxiliary proteins SecDF-YajC and YidC. Zn(2+) is required as a cofactor.

The protein localises to the cell inner membrane. The protein resides in the cytoplasm. The enzyme catalyses ATP + H2O + cellular proteinSide 1 = ADP + phosphate + cellular proteinSide 2.. In terms of biological role, part of the Sec protein translocase complex. Interacts with the SecYEG preprotein conducting channel. Has a central role in coupling the hydrolysis of ATP to the transfer of proteins into and across the cell membrane, serving both as a receptor for the preprotein-SecB complex and as an ATP-driven molecular motor driving the stepwise translocation of polypeptide chains across the membrane. The protein is Protein translocase subunit SecA of Klebsiella pneumoniae subsp. pneumoniae (strain ATCC 700721 / MGH 78578).